The following is a 318-amino-acid chain: tRNA-modifying protein YgfZ (318 aa).

Residues W24 and W185 each contribute to the folate site.

This sequence belongs to the tRNA-modifying YgfZ family.

It localises to the cytoplasm. Folate-binding protein involved in regulating the level of ATP-DnaA and in the modification of some tRNAs. It is probably a key factor in regulatory networks that act via tRNA modification, such as initiation of chromosomal replication. This chain is tRNA-modifying protein YgfZ, found in Buchnera aphidicola subsp. Baizongia pistaciae (strain Bp).